The primary structure comprises 307 residues: MTIIIAGPTAGGKTDLALNLAKLIGGEVVSVDSRQVYKYLTVGTAKPEGEYKNGVYNVDGVNYHLVDFLDLDKTYNTGSFTADASNTAYNINKKGKTAIFAGGTGMYMQSYFGGMDVLPKADQALRAQLADIADKEGKQSLHKMLSEADPESAALIPSGNLHRVMRALEIFKLTGKKASELRTNGFADISQNNFMVYIEWDKEELNKRIEIRTQGMFGGMLKETQDMLAKGYTRNSPGLRSLGYAEVIDFIEGKKTKPEALERIVILTRQYAKRQRTWFARYKNMYKADGSALNAEQILAEYAAWKK.

7–14 (GPTAGGKT) is a binding site for ATP. 9-14 (TAGGKT) provides a ligand contact to substrate. The interaction with substrate tRNA stretch occupies residues 32–35 (DSRQ).

It belongs to the IPP transferase family. Monomer. Mg(2+) serves as cofactor.

It catalyses the reaction adenosine(37) in tRNA + dimethylallyl diphosphate = N(6)-dimethylallyladenosine(37) in tRNA + diphosphate. In terms of biological role, catalyzes the transfer of a dimethylallyl group onto the adenine at position 37 in tRNAs that read codons beginning with uridine, leading to the formation of N6-(dimethylallyl)adenosine (i(6)A). This chain is tRNA dimethylallyltransferase, found in Elusimicrobium minutum (strain Pei191).